Reading from the N-terminus, the 523-residue chain is 2-hydroxyisoflavanone synthase (523 aa).

The chain crosses the membrane as a helical span at residues 2–22; it reads LVELAITLLVIALFIHLRPTP. Position 450 (cysteine 450) interacts with heme.

This sequence belongs to the cytochrome P450 family. The cofactor is heme.

It localises to the microsome membrane. It catalyses the reaction (2S)-liquiritigenin + reduced [NADPH--hemoprotein reductase] + O2 = (2R,3S)-2,4',7-trihydroxyisoflavanone + oxidized [NADPH--hemoprotein reductase] + H2O + H(+). The enzyme catalyses (2S)-naringenin + reduced [NADPH--hemoprotein reductase] + O2 = 2-hydroxy-2,3-dihydrogenistein + oxidized [NADPH--hemoprotein reductase] + H2O + H(+). Functionally, 2-hydroxyisoflavanone synthase, which catalyzes the hydroxylation associated with 1,2-aryl migration of flavanones. Converts liquiritigenin and naringenin into highly unstable precursors of the isoflavones daidzein and genistein. The sequence is that of 2-hydroxyisoflavanone synthase (CYP93C2) from Glycyrrhiza uralensis (Chinese licorice).